The sequence spans 767 residues: Phosphoribosylformylglycinamidine synthase subunit PurL (767 aa).

Residue His-46 is part of the active site. Residues Tyr-49 and Lys-88 each contribute to the ATP site. Residue Glu-90 participates in Mg(2+) binding. Residues 91-94 and Arg-113 contribute to the substrate site; that span reads SHNH. His-92 functions as the Proton acceptor in the catalytic mechanism. Asp-114 lines the Mg(2+) pocket. Residue Gln-237 coordinates substrate. Residue Asp-265 participates in Mg(2+) binding. 309-311 is a binding site for substrate; it reads ESQ. ATP-binding residues include Asp-498 and Gly-535. Asn-536 provides a ligand contact to Mg(2+). Ser-538 contributes to the substrate binding site.

It belongs to the FGAMS family. As to quaternary structure, monomer. Part of the FGAM synthase complex composed of 1 PurL, 1 PurQ and 2 PurS subunits.

The protein localises to the cytoplasm. It carries out the reaction N(2)-formyl-N(1)-(5-phospho-beta-D-ribosyl)glycinamide + L-glutamine + ATP + H2O = 2-formamido-N(1)-(5-O-phospho-beta-D-ribosyl)acetamidine + L-glutamate + ADP + phosphate + H(+). It participates in purine metabolism; IMP biosynthesis via de novo pathway; 5-amino-1-(5-phospho-D-ribosyl)imidazole from N(2)-formyl-N(1)-(5-phospho-D-ribosyl)glycinamide: step 1/2. Part of the phosphoribosylformylglycinamidine synthase complex involved in the purines biosynthetic pathway. Catalyzes the ATP-dependent conversion of formylglycinamide ribonucleotide (FGAR) and glutamine to yield formylglycinamidine ribonucleotide (FGAM) and glutamate. The FGAM synthase complex is composed of three subunits. PurQ produces an ammonia molecule by converting glutamine to glutamate. PurL transfers the ammonia molecule to FGAR to form FGAM in an ATP-dependent manner. PurS interacts with PurQ and PurL and is thought to assist in the transfer of the ammonia molecule from PurQ to PurL. This chain is Phosphoribosylformylglycinamidine synthase subunit PurL, found in Anaeromyxobacter sp. (strain Fw109-5).